We begin with the raw amino-acid sequence, 327 residues long: DNA-directed RNA polymerase subunit alpha (327 aa).

The interval 1 to 233 (MVREKVKVST…NLFIPFLHVE (233 aa)) is alpha N-terminal domain (alpha-NTD). Residues 266-327 (EQGFQYIFID…KKILDILEKK (62 aa)) form an alpha C-terminal domain (alpha-CTD) region.

This sequence belongs to the RNA polymerase alpha chain family. In terms of assembly, in plastids the minimal PEP RNA polymerase catalytic core is composed of four subunits: alpha, beta, beta', and beta''. When a (nuclear-encoded) sigma factor is associated with the core the holoenzyme is formed, which can initiate transcription.

The protein resides in the plastid. Its subcellular location is the chloroplast. The enzyme catalyses RNA(n) + a ribonucleoside 5'-triphosphate = RNA(n+1) + diphosphate. DNA-dependent RNA polymerase catalyzes the transcription of DNA into RNA using the four ribonucleoside triphosphates as substrates. The polypeptide is DNA-directed RNA polymerase subunit alpha (Barbarea verna (Land cress)).